Reading from the N-terminus, the 230-residue chain is Flagellar L-ring protein (230 aa).

Positions 1–21 (MMLKTVLRLPVCAALLALAAG) are cleaved as a signal peptide. Residue Cys-22 is the site of N-palmitoyl cysteine attachment. Cys-22 carries the S-diacylglycerol cysteine lipid modification. Residues 34 to 53 (PLTAPPPPPPQPSARPNGSI) are disordered. Positions 36 to 46 (TAPPPPPPQPS) are enriched in pro residues.

The protein belongs to the FlgH family. In terms of assembly, the basal body constitutes a major portion of the flagellar organelle and consists of four rings (L,P,S, and M) mounted on a central rod.

It localises to the cell outer membrane. It is found in the bacterial flagellum basal body. Assembles around the rod to form the L-ring and probably protects the motor/basal body from shearing forces during rotation. This Bordetella parapertussis (strain 12822 / ATCC BAA-587 / NCTC 13253) protein is Flagellar L-ring protein.